The sequence spans 389 residues: MDIQPWYLKTSKLALALAIIHSKPADRSSREYTEYLASLVTQKESTWKSKLEALEAEVLQLRQKLLLSRISSGLFKNGPDVLPTLSDQEPTSSENTLTLMDDSGCVLSNEQRNEPAELSQHFVESTDPPLLPLPLEKRPRTTLENPLSSHMQFFQHLLELKKWTESSSLKVYLTHFEKDSSTVSDSVSQLLDALITFYRNPKLPFSSFWTEAVGTLARLASDFNLSNHIFKRCSKKLEEFEKTLLQAILENNSINRFQVQRYVSQSLVTLGSCSLLRKSIISLLLSEVNSFVDDLGAIDQDQGIYDVTRYENIFSLFWILEQVLQQAPQGDRTAHMDHSIPEMQTFLQKHDEVIFRLSDAFPLFAFYLWRLGVLLNSAEMETVKNESLP.

Positions 1-127 are interaction with REC114; the sequence is MDIQPWYLKT…LSQHFVESTD (127 aa).

It belongs to the MEI4L family. In terms of assembly, part of the MCD recombinosome complex, at least composed of IHO1, REC114 and MEI4. Forms a complex with REC114; the interaction is required for MEI4 stability. Interacts (via N-terminal domain) with REC114 (via C-terminal domain). Interacts with IHO1. In terms of tissue distribution, expressed in adult testis and brain and in embryonic ovary.

The protein localises to the chromosome. Functionally, required for DNA double-strand breaks (DSBs) formation in unsynapsed regions during meiotic recombination. Probably acts by forming a complex with IHO1 and REC114, which activates DSBs formation in unsynapsed regions, an essential step to ensure completion of synapsis. The chain is Meiosis-specific protein MEI4 from Mus musculus (Mouse).